Here is a 306-residue protein sequence, read N- to C-terminus: D-alanine--D-alanine ligase B (306 aa).

Active-site residues include E15 and S150. Positions 101 to 303 (KLLWQGAGLP…FSQLVVRILE (203 aa)) constitute an ATP-grasp domain. 134-189 (ISSLGLPVIVKPSREGSSVGMSKVVAENALQDALRLAFQHDEEVLIEKWLSGPEFT) provides a ligand contact to ATP. D257, E270, and N272 together coordinate Mg(2+). Residue S281 is part of the active site.

Belongs to the D-alanine--D-alanine ligase family. In terms of assembly, monomer. Requires Mg(2+) as cofactor. Mn(2+) serves as cofactor.

The protein localises to the cytoplasm. The enzyme catalyses 2 D-alanine + ATP = D-alanyl-D-alanine + ADP + phosphate + H(+). The protein operates within cell wall biogenesis; peptidoglycan biosynthesis. Its function is as follows. Cell wall formation. The protein is D-alanine--D-alanine ligase B of Escherichia coli O6:H1 (strain CFT073 / ATCC 700928 / UPEC).